Reading from the N-terminus, the 427-residue chain is MACARPLISVYSEKGESSGKNVTLPAVFKAPIRPDIVNFVHTNLRKNNRQPYAVSELAGHQTSAESWGTGRAVARIPRVRGGGTHRSGQGAFGNMCRGGRMFAPTKTWRRWHRRVNTTQKRYAICSALAASALPALVMSKGHRIEEVPELPLVVEDKVEGYKKTKEAVLLLKKLKAWNDIKKVYASQRMRAGKGKMRNRRRIQRRGPCIIYNEDNGIIKAFRNIPGITLLNVSKLNILKLAPGGHVGRFCIWTESAFRKLDELYGTWRKAASLKSNYNLPMHKMINTDLSRILKSPEIQRALRAPRKKIHRRVLKKNPLKNLRIMLKLNPYAKTMRRNTILRQARNHKLRVDKAAAAAAALQAKSDEKAAVAGKKPVVGKKGKKAAVGVKKQKKPLVGKKAAATKKPAPEKKPAEKKPTTEEKKPAA.

Alanine 2 bears the N-acetylalanine mark. At lysine 14 the chain carries N6-acetyllysine. Residue arginine 97 is modified to Omega-N-methylarginine. Lysine 106 is subject to N6-acetyllysine. A Glycyl lysine isopeptide (Lys-Gly) (interchain with G-Cter in SUMO2) cross-link involves residue lysine 239. Position 259 is an N6-acetyllysine (lysine 259). At threonine 266 the chain carries Phosphothreonine. A phosphoserine mark is found at serine 290 and serine 295. Citrulline is present on arginine 300. Residue lysine 327 forms a Glycyl lysine isopeptide (Lys-Gly) (interchain with G-Cter in SUMO2) linkage. Residues lysine 333 and lysine 353 each carry the N6-acetyllysine modification. Position 364 is an N6-acetyllysine; alternate (lysine 364). Lysine 364 is covalently cross-linked (Glycyl lysine isopeptide (Lys-Gly) (interchain with G-Cter in SUMO1); alternate). Serine 365 carries the post-translational modification Phosphoserine. Residues 369–427 (AAVAGKKPVVGKKGKKAAVGVKKQKKPLVGKKAAATKKPAPEKKPAEKKPTTEEKKPAA) are disordered. Basic residues predominate over residues 377-397 (VVGKKGKKAAVGVKKQKKPLV). Residues 407–427 (PAPEKKPAEKKPTTEEKKPAA) show a composition bias toward basic and acidic residues.

Belongs to the universal ribosomal protein uL4 family. In terms of assembly, component of the large ribosomal subunit. May bind IPO9 with low affinity. Interacts with RBM3. In terms of processing, citrullinated by PADI4.

The protein localises to the cytoplasm. Component of the large ribosomal subunit. The ribosome is a large ribonucleoprotein complex responsible for the synthesis of proteins in the cell. The polypeptide is Large ribosomal subunit protein uL4 (RPL4) (Homo sapiens (Human)).